Here is a 373-residue protein sequence, read N- to C-terminus: Pulmonary surfactant-associated protein B (373 aa).

The N-terminal stretch at 1 to 22 (MAKSHLLPWLLLLPILCGPGTA) is a signal peptide. The propeptide occupies 23–187 (AAITYSLACA…PQTQDLSEQL (165 aa)). Residues 24–64 (AITYSLACAQGPEFWCQSLEQALQCRALGHCLQEVWGHVEA) enclose the Saposin A-type domain. 3 consecutive Saposin B-type domains span residues 64–146 (ADDL…KPRH), 191–268 (PIPY…SSED), and 287–362 (QDSD…AAPF). 9 disulfide bridges follow: C68-C142, C71-C136, C99-C111, C195-C264, C198-C258, C222-C233, C291-C358, C294-C352, and C317-C327. N-linked (GlcNAc...) asparagine glycosylation is present at N73. Residues 267 to 373 (EDSAGPALPA…PLQCVHSPHF (107 aa)) constitute a propeptide that is removed on maturation. Residue N303 is glycosylated (N-linked (GlcNAc...) asparagine).

As to quaternary structure, homodimer; disulfide-linked.

The protein resides in the secreted. It localises to the extracellular space. Its subcellular location is the surface film. Functionally, pulmonary surfactant-associated proteins promote alveolar stability by lowering the surface tension at the air-liquid interface in the peripheral air spaces. SP-B increases the collapse pressure of palmitic acid to nearly 70 millinewtons per meter. The chain is Pulmonary surfactant-associated protein B (SFTPB) from Bos taurus (Bovine).